Here is a 99-residue protein sequence, read N- to C-terminus: Putative RNA-binding protein RbpE (99 aa).

One can recognise an RRM domain in the interval 2–79 (SIYVGNLSYS…RVLKVNKARP (78 aa)). Residues 78–99 (RPREEKGARSGGGSWSRNNGGY) are disordered. Gly residues predominate over residues 86 to 99 (RSGGGSWSRNNGGY).

The protein is Putative RNA-binding protein RbpE (rbpE) of Nostoc sp. (strain PCC 7120 / SAG 25.82 / UTEX 2576).